Consider the following 279-residue polypeptide: MRLPEELLERARDIHSEAPSHRIKLDRVGSFGLKVPVEFKGFLLLAEADVWVSLPEGRRGVDLSRQVEAIYELSNPPKDPFSLCREAAISLLEKLNYADSSGVSIRFDAPLQDGESLKYYGVEISSIASDEIINKIRVEILGMTACPCTAELIRAYKSSEIAATHTQRSLGILEVSTKAEHPDPDKLASIIERAMSSPLRTYTKRPDEGGLVIRSLSNARLAEDVVREMIHLFLEEFGHLPEDTHILAAVRSMESVHMHDIYAERSFSLDEIRKEISSH.

Belongs to the GTP cyclohydrolase IV family. Homodimer. Requires Fe(2+) as cofactor.

It catalyses the reaction GTP + H2O = 7,8-dihydroneopterin 2',3'-cyclic phosphate + formate + diphosphate + H(+). It functions in the pathway cofactor biosynthesis; 5,6,7,8-tetrahydromethanopterin biosynthesis. Functionally, converts GTP to 7,8-dihydro-D-neopterin 2',3'-cyclic phosphate, the first intermediate in the biosynthesis of coenzyme methanopterin. In Korarchaeum cryptofilum (strain OPF8), this protein is GTP cyclohydrolase MptA.